Here is a 273-residue protein sequence, read N- to C-terminus: Phosphate import ATP-binding protein PstB (273 aa).

The interval 1–20 (MTTVSTAAASGPAVPPPRID) is disordered. The 242-residue stretch at 27 to 268 (VAARNLNFYY…PSDRRTQDYI (242 aa)) folds into the ABC transporter domain. 59-66 (GPSGCGKS) is a binding site for ATP.

The protein belongs to the ABC transporter superfamily. Phosphate importer (TC 3.A.1.7) family. The complex is composed of two ATP-binding proteins (PstB), two transmembrane proteins (PstC and PstA) and a solute-binding protein (PstS).

Its subcellular location is the cell inner membrane. The enzyme catalyses phosphate(out) + ATP + H2O = ADP + 2 phosphate(in) + H(+). Part of the ABC transporter complex PstSACB involved in phosphate import. Responsible for energy coupling to the transport system. This chain is Phosphate import ATP-binding protein PstB, found in Nitrobacter winogradskyi (strain ATCC 25391 / DSM 10237 / CIP 104748 / NCIMB 11846 / Nb-255).